The chain runs to 151 residues: Ribonuclease H (151 aa).

An RNase H type-1 domain is found at S2–V143. Positions 11, 49, 71, and 135 each coordinate Mg(2+).

It belongs to the RNase H family. Monomer. Mg(2+) serves as cofactor.

The protein localises to the cytoplasm. It carries out the reaction Endonucleolytic cleavage to 5'-phosphomonoester.. Functionally, endonuclease that specifically degrades the RNA of RNA-DNA hybrids. This chain is Ribonuclease H, found in Stutzerimonas stutzeri (strain A1501) (Pseudomonas stutzeri).